The chain runs to 496 residues: Alanine aminotransferase 1 (496 aa).

Ala-2 carries the N-acetylalanine modification. The residue at position 22 (Thr-22) is a Phosphothreonine. Position 314 is an N6-(pyridoxal phosphate)lysine (Lys-314).

Belongs to the class-I pyridoxal-phosphate-dependent aminotransferase family. Alanine aminotransferase subfamily. As to quaternary structure, homodimer. Pyridoxal 5'-phosphate serves as cofactor. Liver, kidney, heart, and skeletal muscles. Expressed at moderate levels in the adipose tissue.

Its subcellular location is the cytoplasm. The enzyme catalyses L-alanine + 2-oxoglutarate = pyruvate + L-glutamate. It participates in amino-acid degradation; L-alanine degradation via transaminase pathway; pyruvate from L-alanine: step 1/1. Catalyzes the reversible transamination between alanine and 2-oxoglutarate to form pyruvate and glutamate. Participates in cellular nitrogen metabolism and also in liver gluconeogenesis starting with precursors transported from skeletal muscles. The polypeptide is Alanine aminotransferase 1 (GPT) (Homo sapiens (Human)).